Consider the following 387-residue polypeptide: UDP-Gal:alpha-D-GlcNAc-diphosphoundecaprenol alpha-1,3-galactosyltransferase (387 aa).

It belongs to the glycosyltransferase group 1 family. Glycosyltransferase 4 subfamily. Requires Mg(2+) as cofactor. The cofactor is Mn(2+). Fe(2+) is required as a cofactor.

The catalysed reaction is N-acetyl-alpha-D-glucosaminyl-di-trans,octa-cis-undecaprenyl diphosphate + UDP-alpha-D-galactose = alpha-D-Gal-(1-&gt;3)-alpha-D-GlcNAc-di-trans,octa-cis-undecaprenyl diphosphate + UDP + H(+). It functions in the pathway bacterial outer membrane biogenesis; LPS O-antigen biosynthesis. In terms of biological role, involved in the biosynthesis of the lipopolysaccharide (LPS) O-antigen region. Catalyzes the transfer of galactose from UDP-galactose to GlcNAc-undecaprenyl diphosphate via an alpha1,3-linkage. Has strict substrate specificity. The polypeptide is UDP-Gal:alpha-D-GlcNAc-diphosphoundecaprenol alpha-1,3-galactosyltransferase (Escherichia coli).